The sequence spans 298 residues: Max-like protein X (298 aa).

The interval 1 to 63 is disordered; that stretch reads MTEPGASPED…PRGCREDSSH (63 aa). Position 7 is a phosphoserine (S7). The span at 28–37 shows a compositional bias: basic residues; the sequence is GRARARRGAG. Phosphoserine is present on residues S45, S48, S74, S77, and S98. Positions 91–145 are disordered; the sequence is SVVSRANSIGSTSASSVPNTDDEDSDYHQEAYKESYKDRRRRAHTQAEQKRRDAI. Polar residues predominate over residues 94 to 109; that stretch reads SRANSIGSTSASSVPN. 2 stretches are compositionally biased toward basic and acidic residues: residues 116–127 and 135–145; these read DYHQEAYKESYK and TQAEQKRRDAI. Residues 129 to 187 enclose the bHLH domain; that stretch reads RRRRAHTQAEQKRRDAIKRGYDDLQTIVPTCQQQDFSIGSQKLSKAIVLQKTIDYIQFL. A leucine-zipper region spans residues 140-160; it reads KRRDAIKRGYDDLQTIVPTCQ.

In terms of assembly, efficient DNA binding requires dimerization with another bHLH protein. Binds DNA as a heterodimer with MAD1, MAD4, MNT, WBSCR14 and MLXIP. Can also bind DNA as a homodimer. As to expression, expressed in all tissues tested, including spleen, thymus, prostate, ovary, intestine, colon, peripheral blood leukocyte, heart, liver, skeletal muscle and kidney. Lower levels of expression in testis, brain, placenta and lung.

The protein localises to the cytoplasm. The protein resides in the nucleus. In terms of biological role, transcription regulator. Forms a sequence-specific DNA-binding protein complex with MAD1, MAD4, MNT, WBSCR14 and MLXIP which recognizes the core sequence 5'-CACGTG-3'. The TCFL4-MAD1, TCFL4-MAD4, TCFL4-WBSCR14 complexes are transcriptional repressors. Plays a role in transcriptional activation of glycolytic target genes. Involved in glucose-responsive gene regulation. The polypeptide is Max-like protein X (MLX) (Homo sapiens (Human)).